The primary structure comprises 490 residues: Betaine aldehyde dehydrogenase (490 aa).

3 residues coordinate K(+): threonine 26, isoleucine 27, and aspartate 93. Glycine 150–tryptophan 152 serves as a coordination point for NAD(+). The active-site Charge relay system is the lysine 162. Lysine 176–glutamate 179 contributes to the NAD(+) binding site. Valine 180 is a binding site for K(+). Glycine 230–threonine 233 provides a ligand contact to NAD(+). Leucine 246 provides a ligand contact to K(+). Catalysis depends on glutamate 252, which acts as the Proton acceptor. The NAD(+) site is built by glycine 254, cysteine 286, and glutamate 387. Cysteine 286 (nucleophile) is an active-site residue. At cysteine 286 the chain carries Cysteine sulfenic acid (-SOH). Residues lysine 457 and glycine 460 each contribute to the K(+) site. The active-site Charge relay system is the glutamate 464.

Belongs to the aldehyde dehydrogenase family. In terms of assembly, dimer of dimers. It depends on K(+) as a cofactor.

It carries out the reaction betaine aldehyde + NAD(+) + H2O = glycine betaine + NADH + 2 H(+). The protein operates within amine and polyamine biosynthesis; betaine biosynthesis via choline pathway; betaine from betaine aldehyde: step 1/1. In terms of biological role, involved in the biosynthesis of the osmoprotectant glycine betaine. Catalyzes the irreversible oxidation of betaine aldehyde to the corresponding acid. In Pseudomonas aeruginosa (strain UCBPP-PA14), this protein is Betaine aldehyde dehydrogenase.